The primary structure comprises 716 residues: Fatty acid oxidation complex subunit alpha (716 aa).

Positions 1–189 (MIYQSPTIQV…KVGAIDAVVA (189 aa)) are enoyl-CoA hydratase/isomerase. Position 296 (aspartate 296) interacts with substrate. Positions 311-716 (KNIDTAAVLG…AANNGSYYQS (406 aa)) are 3-hydroxyacyl-CoA dehydrogenase. NAD(+) is bound by residues methionine 324, aspartate 343, 400–402 (VVE), lysine 407, and serine 429. Histidine 450 functions as the For 3-hydroxyacyl-CoA dehydrogenase activity in the catalytic mechanism. An NAD(+)-binding site is contributed by asparagine 453. Asparagine 500 lines the substrate pocket.

It in the N-terminal section; belongs to the enoyl-CoA hydratase/isomerase family. In the C-terminal section; belongs to the 3-hydroxyacyl-CoA dehydrogenase family. As to quaternary structure, heterotetramer of two alpha chains (FadB) and two beta chains (FadA).

The catalysed reaction is a (3S)-3-hydroxyacyl-CoA + NAD(+) = a 3-oxoacyl-CoA + NADH + H(+). It catalyses the reaction a (3S)-3-hydroxyacyl-CoA = a (2E)-enoyl-CoA + H2O. It carries out the reaction a 4-saturated-(3S)-3-hydroxyacyl-CoA = a (3E)-enoyl-CoA + H2O. The enzyme catalyses (3S)-3-hydroxybutanoyl-CoA = (3R)-3-hydroxybutanoyl-CoA. The catalysed reaction is a (3Z)-enoyl-CoA = a 4-saturated (2E)-enoyl-CoA. It catalyses the reaction a (3E)-enoyl-CoA = a 4-saturated (2E)-enoyl-CoA. Its pathway is lipid metabolism; fatty acid beta-oxidation. Functionally, involved in the aerobic and anaerobic degradation of long-chain fatty acids via beta-oxidation cycle. Catalyzes the formation of 3-oxoacyl-CoA from enoyl-CoA via L-3-hydroxyacyl-CoA. It can also use D-3-hydroxyacyl-CoA and cis-3-enoyl-CoA as substrate. The protein is Fatty acid oxidation complex subunit alpha of Shewanella sediminis (strain HAW-EB3).